A 64-amino-acid chain; its full sequence is Large ribosomal subunit protein uL29 (64 aa).

Belongs to the universal ribosomal protein uL29 family.

In Paraburkholderia phytofirmans (strain DSM 17436 / LMG 22146 / PsJN) (Burkholderia phytofirmans), this protein is Large ribosomal subunit protein uL29.